The primary structure comprises 368 residues: Acetyl-coenzyme A carboxylase carboxyl transferase subunit alpha (368 aa).

The 251-residue stretch at 44 to 294 folds into the CoA carboxyltransferase C-terminal domain; that stretch reads EIDNKLQEIY…RKSIEKNLNE (251 aa).

Belongs to the AccA family. In terms of assembly, acetyl-CoA carboxylase is a heterohexamer composed of biotin carboxyl carrier protein (AccB), biotin carboxylase (AccC) and two subunits each of ACCase subunit alpha (AccA) and ACCase subunit beta (AccD).

Its subcellular location is the cytoplasm. The enzyme catalyses N(6)-carboxybiotinyl-L-lysyl-[protein] + acetyl-CoA = N(6)-biotinyl-L-lysyl-[protein] + malonyl-CoA. Its pathway is lipid metabolism; malonyl-CoA biosynthesis; malonyl-CoA from acetyl-CoA: step 1/1. Component of the acetyl coenzyme A carboxylase (ACC) complex. First, biotin carboxylase catalyzes the carboxylation of biotin on its carrier protein (BCCP) and then the CO(2) group is transferred by the carboxyltransferase to acetyl-CoA to form malonyl-CoA. In Pelagibacter ubique (strain HTCC1062), this protein is Acetyl-coenzyme A carboxylase carboxyl transferase subunit alpha.